The chain runs to 297 residues: 4-hydroxy-tetrahydrodipicolinate synthase (297 aa).

Residue Thr47 coordinates pyruvate. The active-site Proton donor/acceptor is the Tyr136. Lys165 (schiff-base intermediate with substrate) is an active-site residue. Ile206 contributes to the pyruvate binding site.

It belongs to the DapA family. Homotetramer; dimer of dimers.

Its subcellular location is the cytoplasm. It carries out the reaction L-aspartate 4-semialdehyde + pyruvate = (2S,4S)-4-hydroxy-2,3,4,5-tetrahydrodipicolinate + H2O + H(+). It participates in amino-acid biosynthesis; L-lysine biosynthesis via DAP pathway; (S)-tetrahydrodipicolinate from L-aspartate: step 3/4. Its function is as follows. Catalyzes the condensation of (S)-aspartate-beta-semialdehyde [(S)-ASA] and pyruvate to 4-hydroxy-tetrahydrodipicolinate (HTPA). This Campylobacter fetus subsp. fetus (strain 82-40) protein is 4-hydroxy-tetrahydrodipicolinate synthase.